A 1077-amino-acid chain; its full sequence is ATP-dependent DNA helicase MPH1 (1077 aa).

Positions 99–266 (IVHRALFENV…EVVDNLQISK (168 aa)) constitute a Helicase ATP-binding domain. 112-119 (IPTGMGKT) serves as a coordination point for ATP. A DEAH box motif is present at residues 214–217 (DEAH). The Helicase C-terminal domain occupies 511-660 (KKVDRIRRLE…SLNYKVTDRI (150 aa)). Disordered stretches follow at residues 536-556 (EKLA…ISGM) and 831-859 (TLSS…PKRQ). Residues 831–841 (TLSSDNKSTPD) show a composition bias toward polar residues.

It belongs to the DEAD box helicase family. DEAH subfamily. FANCM sub-subfamily. In terms of assembly, interacts with the MHF histone-fold complex to form the FANCM-MHF complex.

The protein localises to the nucleus. The catalysed reaction is ATP + H2O = ADP + phosphate + H(+). In terms of biological role, ATP-dependent DNA helicase involved in DNA damage repair by homologous recombination and in genome maintenance. Capable of unwinding D-loops. Plays a role in limiting crossover recombinants during mitotic DNA double-strand break (DSB) repair. Component of a FANCM-MHF complex which promotes gene conversion at blocked replication forks, probably by reversal of the stalled fork. The polypeptide is ATP-dependent DNA helicase MPH1 (Eremothecium gossypii (strain ATCC 10895 / CBS 109.51 / FGSC 9923 / NRRL Y-1056) (Yeast)).